A 197-amino-acid chain; its full sequence is MAKIRDPRFKLSRRLGVNIYGHPKAMKRATRENSREGKKLSNYGKQLLEKQKIRSYYGVLEKQFLRYVKKAMKSKERTGDVLLRSLECRLDNIAYRIGFANSIRQARQMVNHGHILVNGSKVNIPSYEVKTGDVITLREKYRKNDEFADNFLALKKFSLPYIEKDYDKFSGVLIKEPERDEIPIDANETLVVELYSK.

Residues 88 to 151 (CRLDNIAYRI…RKNDEFADNF (64 aa)) form the S4 RNA-binding domain.

It belongs to the universal ribosomal protein uS4 family. As to quaternary structure, part of the 30S ribosomal subunit. Contacts protein S5. The interaction surface between S4 and S5 is involved in control of translational fidelity.

Functionally, one of the primary rRNA binding proteins, it binds directly to 16S rRNA where it nucleates assembly of the body of the 30S subunit. Its function is as follows. With S5 and S12 plays an important role in translational accuracy. The protein is Small ribosomal subunit protein uS4B of Clostridium botulinum (strain Hall / ATCC 3502 / NCTC 13319 / Type A).